The sequence spans 162 residues: SsrA-binding protein (162 aa).

It belongs to the SmpB family.

The protein localises to the cytoplasm. In terms of biological role, required for rescue of stalled ribosomes mediated by trans-translation. Binds to transfer-messenger RNA (tmRNA), required for stable association of tmRNA with ribosomes. tmRNA and SmpB together mimic tRNA shape, replacing the anticodon stem-loop with SmpB. tmRNA is encoded by the ssrA gene; the 2 termini fold to resemble tRNA(Ala) and it encodes a 'tag peptide', a short internal open reading frame. During trans-translation Ala-aminoacylated tmRNA acts like a tRNA, entering the A-site of stalled ribosomes, displacing the stalled mRNA. The ribosome then switches to translate the ORF on the tmRNA; the nascent peptide is terminated with the 'tag peptide' encoded by the tmRNA and targeted for degradation. The ribosome is freed to recommence translation, which seems to be the essential function of trans-translation. The protein is SsrA-binding protein of Shewanella frigidimarina (strain NCIMB 400).